We begin with the raw amino-acid sequence, 183 residues long: MSTERAIFAGGCFWCMVEPFEERPGILAVTSGYTGGHIEYPTYDQVLSKASGHTEAVEILFDNELISYDELLDIYWSLIDPTDADGQIYDRGANYRPVIFVESEEQRIAAQKSKIALEKSGIWDKPIVVPIEEAKTFWPAEEYHQQYYKKDPKRYQAMHKARERYLALQRFKGKFKFLRKNTR.

C12 is an active-site residue.

The protein belongs to the MsrA Met sulfoxide reductase family.

The catalysed reaction is L-methionyl-[protein] + [thioredoxin]-disulfide + H2O = L-methionyl-(S)-S-oxide-[protein] + [thioredoxin]-dithiol. The enzyme catalyses [thioredoxin]-disulfide + L-methionine + H2O = L-methionine (S)-S-oxide + [thioredoxin]-dithiol. Has an important function as a repair enzyme for proteins that have been inactivated by oxidation. Catalyzes the reversible oxidation-reduction of methionine sulfoxide in proteins to methionine. The chain is Peptide methionine sulfoxide reductase MsrA 1 (msrA1) from Lactococcus lactis subsp. lactis (strain IL1403) (Streptococcus lactis).